The chain runs to 419 residues: 3-isopropylmalate dehydratase large subunit (419 aa).

[4Fe-4S] cluster is bound by residues C300, C360, and C363.

It belongs to the aconitase/IPM isomerase family. LeuC type 2 subfamily. In terms of assembly, heterodimer of LeuC and LeuD. [4Fe-4S] cluster serves as cofactor.

The enzyme catalyses (2R,3S)-3-isopropylmalate = (2S)-2-isopropylmalate. It participates in amino-acid biosynthesis; L-leucine biosynthesis; L-leucine from 3-methyl-2-oxobutanoate: step 2/4. Functionally, catalyzes the isomerization between 2-isopropylmalate and 3-isopropylmalate, via the formation of 2-isopropylmaleate. This Nitratidesulfovibrio vulgaris (strain DP4) (Desulfovibrio vulgaris) protein is 3-isopropylmalate dehydratase large subunit.